Here is a 135-residue protein sequence, read N- to C-terminus: Interleukin-5 (135 aa).

An N-terminal signal peptide occupies residues 1-19; that stretch reads MRVLLQLGLLALGAVCVCA. Residues Asn-48, Asn-77, and Asn-91 are each glycosylated (N-linked (GlcNAc...) asparagine).

Belongs to the IL-5 family. As to quaternary structure, homodimer; disulfide-linked. Interacts with IL5RA. Interacts with CSF2RB.

It is found in the secreted. In terms of biological role, homodimeric cytokine expressed predominantly by T-lymphocytes and NK cells that plays an important role in the survival, differentiation, and chemotaxis of eosinophils. Also acts on activated and resting B-cells to induce immunoglobulin production, growth, and differentiation. Mechanistically, exerts its biological effects through a receptor composed of IL5RA subunit and the cytokine receptor common subunit beta/CSF2RB. Binding to the receptor leads to activation of various kinases including LYN, SYK and JAK2 and thereby propagates signals through the RAS-MAPK and JAK-STAT5 pathways respectively. The protein is Interleukin-5 (IL5) of Cavia porcellus (Guinea pig).